Consider the following 349-residue polypeptide: Cyclic AMP-dependent transcription factor ATF-4 (349 aa).

Disordered regions lie at residues 49 to 75 (FSSDKAGSSEWPAMDDGLASASDTGKE), 204 to 271 (PPCV…TAKV), and 279 to 298 (KLKKMEQNKTAATRYRQKKR). 4-hydroxyproline is present on P60. At T212 the chain carries Phosphothreonine. Residues S214, S218, S223, S230, and S234 each carry the phosphoserine modification. Residues 214 to 223 (SDNDSGICMS) carry the BetaTrCP degron motif motif. The segment covering 229–239 (GSPQHSPSTSR) has biased composition (polar residues). P235 bears the 4-hydroxyproline mark. A Phosphoserine modification is found at S247. S251 carries the post-translational modification Phosphoserine; by RPS6KA3. Glycyl lysine isopeptide (Lys-Gly) (interchain with G-Cter in SUMO2) cross-links involve residues K258 and K270. The region spanning 276–339 (LDKKLKKMEQ…QYLKDLIEEV (64 aa)) is the bZIP domain. The basic motif stretch occupies residues 278–298 (KKLKKMEQNKTAATRYRQKKR). Residues 303–339 (ALTGECKELEKKNEALKEKADSLAKEIQYLKDLIEEV) form an interaction with GABBR1 region. Residues 304–332 (LTGECKELEKKNEALKEKADSLAKEIQYL) form a leucine-zipper region. N6-acetyllysine is present on K309.

Belongs to the bZIP family. Binds DNA as a homodimer and as a heterodimer. Heterodimer; heterodimerizes with CEBPB. Heterodimer; heterodimerizes with DDIT3/CHOP. Interacts with CEP290 (via an N-terminal region). Interacts with NEK6, DAPK2 (isoform 2) and ZIPK/DAPK3. Interacts (via its leucine zipper domain) with GABBR1 and GABBR2 (via their C-termini). Forms a heterodimer with TXLNG in osteoblasts. Interacts (via its DNA binding domain) with FOXO1 (C-terminal half); the interaction occurs in osteoblasts and regulates glucose homeostasis through suppression of beta-cell proliferation and a decrease in insulin production. Interacts with SATB2; the interaction results in enhanced DNA binding and transactivation by these transcription factors. Interacts with ABRAXAS2. Interacts with TRIB3, inhibiting the transactivation activity of ATF4. Interacts with DISC1; which inhibits ATF4 transcription factor activity by disrupting ATF4 dimerization and DNA-binding. Interacts with EP300/p300; EP300/p300 stabilizes ATF4 and increases its transcriptional activity independently of its catalytic activity by preventing its ubiquitination. Post-translationally, ubiquitinated by SCF(BTRC) in response to mTORC1 signal, followed by proteasomal degradation and leading to down-regulate expression of SIRT4. Interaction with EP300/p300 inhibits ubiquitination by SCF(BTRC). Phosphorylation at Ser-251 by RPS6KA3/RSK2 in osteoblasts enhances transactivation activity and promotes osteoblast differentiation. Phosphorylated on the betaTrCP degron motif at Ser-218, followed by phosphorylation at Thr-212, Ser-223, Ser-230, Ser-234 and Ser-247, promoting interaction with BTRC and ubiquitination. Phosphorylation is promoted by mTORC1. Phosphorylation at Ser-214 by CK2 decreases its stability. Phosphorylated by NEK6. In terms of processing, hydroxylated by PHD3, leading to decreased protein stability. In terms of tissue distribution, ubiquitously expressed in adults.

It localises to the nucleus. Its subcellular location is the nucleus speckle. The protein resides in the cytoplasm. The protein localises to the cell membrane. It is found in the cytoskeleton. It localises to the microtubule organizing center. Its subcellular location is the centrosome. Transcription factor that binds the cAMP response element (CRE) (consensus: 5'-GTGACGT[AC][AG]-3') and displays two biological functions, as regulator of metabolic and redox processes under normal cellular conditions, and as master transcription factor during integrated stress response (ISR). Binds to asymmetric CRE's as a heterodimer and to palindromic CRE's as a homodimer. Core effector of the ISR, which is required for adaptation to various stress such as endoplasmic reticulum (ER) stress, amino acid starvation, mitochondrial stress or oxidative stress. During ISR, ATF4 translation is induced via an alternative ribosome translation re-initiation mechanism in response to EIF2S1/eIF-2-alpha phosphorylation, and stress-induced ATF4 acts as a master transcription factor of stress-responsive genes in order to promote cell recovery. Promotes the transcription of genes linked to amino acid sufficiency and resistance to oxidative stress to protect cells against metabolic consequences of ER oxidation. Activates the transcription of NLRP1, possibly in concert with other factors in response to ER stress. Activates the transcription of asparagine synthetase (ASNS) in response to amino acid deprivation or ER stress. However, when associated with DDIT3/CHOP, the transcriptional activation of the ASNS gene is inhibited in response to amino acid deprivation. Together with DDIT3/CHOP, mediates programmed cell death by promoting the expression of genes involved in cellular amino acid metabolic processes, mRNA translation and the terminal unfolded protein response (terminal UPR), a cellular response that elicits programmed cell death when ER stress is prolonged and unresolved. Activates the expression of COX7A2L/SCAF1 downstream of the EIF2AK3/PERK-mediated unfolded protein response, thereby promoting formation of respiratory chain supercomplexes and increasing mitochondrial oxidative phosphorylation. Together with DDIT3/CHOP, activates the transcription of the IRS-regulator TRIB3 and promotes ER stress-induced neuronal cell death by regulating the expression of BBC3/PUMA in response to ER stress. May cooperate with the UPR transcriptional regulator QRICH1 to regulate ER protein homeostasis which is critical for cell viability in response to ER stress. In the absence of stress, ATF4 translation is at low levels and it is required for normal metabolic processes such as embryonic lens formation, fetal liver hematopoiesis, bone development and synaptic plasticity. Acts as a regulator of osteoblast differentiation in response to phosphorylation by RPS6KA3/RSK2: phosphorylation in osteoblasts enhances transactivation activity and promotes expression of osteoblast-specific genes and post-transcriptionally regulates the synthesis of Type I collagen, the main constituent of the bone matrix. Cooperates with FOXO1 in osteoblasts to regulate glucose homeostasis through suppression of beta-cell production and decrease in insulin production. Activates transcription of SIRT4. Regulates the circadian expression of the core clock component PER2 and the serotonin transporter SLC6A4. Binds in a circadian time-dependent manner to the cAMP response elements (CRE) in the SLC6A4 and PER2 promoters and periodically activates the transcription of these genes. Mainly acts as a transcriptional activator in cellular stress adaptation, but it can also act as a transcriptional repressor: acts as a regulator of synaptic plasticity by repressing transcription, thereby inhibiting induction and maintenance of long-term memory. Regulates synaptic functions via interaction with DISC1 in neurons, which inhibits ATF4 transcription factor activity by disrupting ATF4 dimerization and DNA-binding. This is Cyclic AMP-dependent transcription factor ATF-4 from Mus musculus (Mouse).